The chain runs to 212 residues: Thymidylate kinase (212 aa).

11 to 18 (GPEGAGKT) is an ATP binding site.

It belongs to the thymidylate kinase family.

It catalyses the reaction dTMP + ATP = dTDP + ADP. Functionally, phosphorylation of dTMP to form dTDP in both de novo and salvage pathways of dTTP synthesis. The polypeptide is Thymidylate kinase (Streptococcus pneumoniae serotype 2 (strain D39 / NCTC 7466)).